The primary structure comprises 743 residues: NAD(P)H-quinone oxidoreductase subunit 5, chloroplastic (743 aa).

The next 16 membrane-spanning stretches (helical) occupy residues W9 to F29, W40 to I60, I89 to I109, F125 to I145, I147 to T167, G185 to F205, N219 to A239, T258 to A278, F284 to F304, L327 to I347, A354 to C374, N396 to S416, W425 to Y445, L551 to F571, V607 to V627, and Y723 to L743.

It belongs to the complex I subunit 5 family. In terms of assembly, NDH is composed of at least 16 different subunits, 5 of which are encoded in the nucleus.

Its subcellular location is the plastid. The protein localises to the chloroplast thylakoid membrane. It carries out the reaction a plastoquinone + NADH + (n+1) H(+)(in) = a plastoquinol + NAD(+) + n H(+)(out). The enzyme catalyses a plastoquinone + NADPH + (n+1) H(+)(in) = a plastoquinol + NADP(+) + n H(+)(out). Functionally, NDH shuttles electrons from NAD(P)H:plastoquinone, via FMN and iron-sulfur (Fe-S) centers, to quinones in the photosynthetic chain and possibly in a chloroplast respiratory chain. The immediate electron acceptor for the enzyme in this species is believed to be plastoquinone. Couples the redox reaction to proton translocation, and thus conserves the redox energy in a proton gradient. The protein is NAD(P)H-quinone oxidoreductase subunit 5, chloroplastic (ndhF) of Ambrosia trifida (Giant ragweed).